Here is a 448-residue protein sequence, read N- to C-terminus: Binary larvicide subunit BinB (448 aa).

A beta-trefoil domain region spans residues 1–198; it reads MCDSKDNSGV…TAFVNSSFYA (198 aa). A disulfide bridge links Cys67 with Cys161. The probable pore-forming domain stretch occupies residues 199–448; it reads AAIPQLPQTS…NEELIPKINQ (250 aa).

It belongs to the toxin_10 family. As to quaternary structure, forms a heterodimer with BinA. Upon toxin crystal solubilization with NaOH at pH 12, only the 63-kDa (binB) and 43-kDa (binA) proteins were detected. Interacts with mosquito protein Cpm1 which acts as its host receptor. Post-translationally, processed by proteases extracted from C.pipiens larval gut; unlike its partner BinA, it does not form a stable digestion product.

The protein localises to the spore. It localises to the perispore. Its function is as follows. Component of a binary toxin active against Culex and some Aedes mosquito larvae. This subunit alone has no toxic larvicidal activity. This subunit is responsible for localized binding to specific regions of the host larval gut. Binary toxin internalization into host gut cells requires both proteins. The sequence is that of Binary larvicide subunit BinB (binB) from Lysinibacillus sphaericus (Bacillus sphaericus).